We begin with the raw amino-acid sequence, 410 residues long: Arginine biosynthesis bifunctional protein ArgJ (410 aa).

Residues threonine 160, lysine 186, threonine 197, glutamate 283, asparagine 405, and threonine 410 each contribute to the substrate site. Threonine 197 serves as the catalytic Nucleophile.

It belongs to the ArgJ family. As to quaternary structure, heterotetramer of two alpha and two beta chains.

The protein resides in the cytoplasm. The catalysed reaction is N(2)-acetyl-L-ornithine + L-glutamate = N-acetyl-L-glutamate + L-ornithine. It carries out the reaction L-glutamate + acetyl-CoA = N-acetyl-L-glutamate + CoA + H(+). Its pathway is amino-acid biosynthesis; L-arginine biosynthesis; L-ornithine and N-acetyl-L-glutamate from L-glutamate and N(2)-acetyl-L-ornithine (cyclic): step 1/1. It functions in the pathway amino-acid biosynthesis; L-arginine biosynthesis; N(2)-acetyl-L-ornithine from L-glutamate: step 1/4. Competitively inhibited by L-ornithine. Catalyzes two activities which are involved in the cyclic version of arginine biosynthesis: the synthesis of N-acetylglutamate from glutamate and acetyl-CoA as the acetyl donor, and of ornithine by transacetylation between N(2)-acetylornithine and glutamate. The polypeptide is Arginine biosynthesis bifunctional protein ArgJ (Geobacillus stearothermophilus (Bacillus stearothermophilus)).